We begin with the raw amino-acid sequence, 240 residues long: Ribosomal RNA small subunit methyltransferase G (240 aa).

S-adenosyl-L-methionine contacts are provided by residues Gly-79, 130-131 (AE), and Arg-149.

This sequence belongs to the methyltransferase superfamily. RNA methyltransferase RsmG family.

It localises to the cytoplasm. Functionally, specifically methylates the N7 position of a guanine in 16S rRNA. The sequence is that of Ribosomal RNA small subunit methyltransferase G from Moorella thermoacetica (strain ATCC 39073 / JCM 9320).